Here is a 167-residue protein sequence, read N- to C-terminus: 6,7-dimethyl-8-ribityllumazine synthase (167 aa).

5-amino-6-(D-ribitylamino)uracil-binding positions include Phe23, 57 to 59 (TYE), and 81 to 83 (AVI). (2S)-2-hydroxy-3-oxobutyl phosphate is bound at residue 86-87 (GT). Catalysis depends on His89, which acts as the Proton donor. 5-amino-6-(D-ribitylamino)uracil is bound at residue Phe119. Arg133 is a binding site for (2S)-2-hydroxy-3-oxobutyl phosphate.

It belongs to the DMRL synthase family.

The enzyme catalyses (2S)-2-hydroxy-3-oxobutyl phosphate + 5-amino-6-(D-ribitylamino)uracil = 6,7-dimethyl-8-(1-D-ribityl)lumazine + phosphate + 2 H2O + H(+). It participates in cofactor biosynthesis; riboflavin biosynthesis; riboflavin from 2-hydroxy-3-oxobutyl phosphate and 5-amino-6-(D-ribitylamino)uracil: step 1/2. Catalyzes the formation of 6,7-dimethyl-8-ribityllumazine by condensation of 5-amino-6-(D-ribitylamino)uracil with 3,4-dihydroxy-2-butanone 4-phosphate. This is the penultimate step in the biosynthesis of riboflavin. This is 6,7-dimethyl-8-ribityllumazine synthase from Myxococcus xanthus (strain DK1622).